The following is a 356-amino-acid chain: uncharacterized protein (356 aa).

6 helical membrane passes run 2 to 22, 35 to 55, 76 to 96, 99 to 119, 124 to 144, and 151 to 171; these read FEAI…FHRL, EYVT…PIPF, NMIY…FIFG, IIYG…GPFL, IISL…LALL, and VEIL…AITF. Residues 218 to 353 form the GGDEF domain; sequence QSLALLLIDI…GRNKVMFNPI (136 aa).

It localises to the cell membrane. This is an uncharacterized protein from Staphylococcus epidermidis (strain ATCC 35984 / DSM 28319 / BCRC 17069 / CCUG 31568 / BM 3577 / RP62A).